The following is a 211-amino-acid chain: DNA-directed RNA polymerases I, II, and III subunit RPABC1 (211 aa).

Belongs to the archaeal Rpo5/eukaryotic RPB5 RNA polymerase subunit family. As to quaternary structure, component of the RNA polymerase I (Pol I), RNA polymerase II (Pol II) and RNA polymerase III (Pol III) complexes consisting of at least 13, 12 and 17 subunits, respectively. In RNA Pol II, this subunit is present in 2-fold molar excess over the other subunits.

The protein resides in the nucleus. DNA-dependent RNA polymerase catalyzes the transcription of DNA into RNA using the four ribonucleoside triphosphates as substrates. Common component of RNA polymerases I, II and III which synthesize ribosomal RNA precursors, mRNA precursors and many functional non-coding RNAs, and small RNAs, such as 5S rRNA and tRNAs, respectively. Pol II is the central component of the basal RNA polymerase II transcription machinery. Pols are composed of mobile elements that move relative to each other. In Pol II, RPB5 is part of the lower jaw surrounding the central large cleft and thought to grab the incoming DNA template. Seems to be the major component in this process. The sequence is that of DNA-directed RNA polymerases I, II, and III subunit RPABC1 from Caenorhabditis briggsae.